Here is a 224-residue protein sequence, read N- to C-terminus: Putative adhesin A1G_07050 (224 aa).

The first 22 residues, 1–22, serve as a signal peptide directing secretion; that stretch reads MKKLLLIAATSATILSSSVSFA.

This chain is Putative adhesin A1G_07050, found in Rickettsia rickettsii (strain Sheila Smith).